A 577-amino-acid polypeptide reads, in one-letter code: Arginine--tRNA ligase (577 aa).

Positions 122-132 (PNVAKEMHVGH) match the 'HIGH' region motif.

This sequence belongs to the class-I aminoacyl-tRNA synthetase family. In terms of assembly, monomer.

The protein localises to the cytoplasm. The catalysed reaction is tRNA(Arg) + L-arginine + ATP = L-arginyl-tRNA(Arg) + AMP + diphosphate. The sequence is that of Arginine--tRNA ligase from Aliivibrio fischeri (strain MJ11) (Vibrio fischeri).